Reading from the N-terminus, the 260-residue chain is Transcriptional activator protein AsaR (260 aa).

The region spanning 176-241 (EDDPQEALTD…QAIAKGVSSG (66 aa)) is the HTH luxR-type domain. Residues 200–219 (SGEIACILGITERTVNYHLN) constitute a DNA-binding region (H-T-H motif).

It belongs to the autoinducer-regulated transcriptional regulatory protein family.

Its function is as follows. Functions as a BHL-responsive transcriptional regulator. This chain is Transcriptional activator protein AsaR, found in Aeromonas salmonicida.